The sequence spans 609 residues: D-apionate lactonase (609 aa).

The enzyme catalyses D-apionolactone + H2O = D-apionate + H(+). It functions in the pathway carbohydrate metabolism. Its function is as follows. Involved in catabolism of D-apiose. Hydrolyzes D-apionolactone to D-apionate. The polypeptide is D-apionate lactonase (Brucella anthropi (strain ATCC 49188 / DSM 6882 / CCUG 24695 / JCM 21032 / LMG 3331 / NBRC 15819 / NCTC 12168 / Alc 37) (Ochrobactrum anthropi)).